Reading from the N-terminus, the 95-residue chain is Co-chaperonin GroES (95 aa).

This sequence belongs to the GroES chaperonin family. In terms of assembly, heptamer of 7 subunits arranged in a ring. Interacts with the chaperonin GroEL.

Its subcellular location is the cytoplasm. Functionally, together with the chaperonin GroEL, plays an essential role in assisting protein folding. The GroEL-GroES system forms a nano-cage that allows encapsulation of the non-native substrate proteins and provides a physical environment optimized to promote and accelerate protein folding. GroES binds to the apical surface of the GroEL ring, thereby capping the opening of the GroEL channel. The sequence is that of Co-chaperonin GroES from Rickettsia typhi (strain ATCC VR-144 / Wilmington).